The chain runs to 790 residues: Nuclear cap-binding protein subunit 1 (790 aa).

Residues 1 to 26 are disordered; the sequence is MSRRRHSDENDGGQPHKRRKTSDANE. Residues 3-20 carry the Nuclear localization signal motif; it reads RRRHSDENDGGQPHKRRK. A Phosphoserine; by RPS6KB1 modification is found at Ser7. Residue Thr21 is modified to Phosphothreonine; by RPS6KB1. Position 22 is a phosphoserine; by RPS6KB1 (Ser22). Residues 28–240 enclose the MIF4G domain; the sequence is EDHLESLICK…CLWAQIQKLK (213 aa). Ser201 bears the Phosphoserine mark. Lys204 is modified (N6-acetyllysine). The stretch at 643-713 forms a coiled coil; sequence STIRKMNKHV…SEQKNLFLVI (71 aa). A Glycyl lysine isopeptide (Lys-Gly) (interchain with G-Cter in SUMO2) cross-link involves residue Lys684. Lys698 is subject to N6-acetyllysine.

Belongs to the NCBP1 family. Component of the nuclear cap-binding complex (CBC), a heterodimer composed of NCBP1/CBP80 and NCBP2/CBP20 that interacts with m7GpppG-capped RNA. Found in a U snRNA export complex containing PHAX/RNUXA, NCBP1/CBP80, NCBP2/CBP20, RAN, XPO1 and m7G-capped RNA. Identified in a IGF2BP1-dependent mRNP granule complex containing untranslated mRNAs. Interacts with PHAX/RNUXA, SRRT/ARS2, EIF4G2, IGF2BP1, HNRNPF, HNRNPH1, KIAA0427/CTIF, PARN, DROSHA, UPF1 and ALYREF/THOC4. May interact with EIF4G1; the interaction is however controversial since it is reported by PubMed:11340157, PubMed:15059963 and PubMed:15361857, but is not observed by PubMed:19648179. The large PER complex involved in the repression of transcriptional termination is composed of at least PER2, CDK9, DDX5, DHX9, NCBP1/CBP80 and POLR2A. Component of an alternative nuclear cap-binding complex (CBC) composed of NCBP1/CBP80 and NCBP3. Interacts with METTL3. Interacts with ZFC3H1 in a RNase-insensitive manner. Interacts with MTREX. Interacts with TASOR. Interacts with DHX34; the interaction is RNA-dependent. Interacts with KPNA3. Post-translationally, dephosphorylated at Thr-21 by the PNUTS-PP1 complex during RNA polymerase II transcription pause-release.

It is found in the nucleus. Its subcellular location is the cytoplasm. Functionally, component of the cap-binding complex (CBC), which binds cotranscriptionally to the 5'-cap of pre-mRNAs and is involved in various processes such as pre-mRNA splicing, translation regulation, nonsense-mediated mRNA decay, RNA-mediated gene silencing (RNAi) by microRNAs (miRNAs) and mRNA export. The CBC complex is involved in mRNA export from the nucleus via its interaction with ALYREF/THOC4/ALY, leading to the recruitment of the mRNA export machinery to the 5'-end of mRNA and to mRNA export in a 5' to 3' direction through the nuclear pore. The CBC complex is also involved in mediating U snRNA and intronless mRNAs export from the nucleus. The CBC complex is essential for a pioneer round of mRNA translation, before steady state translation when the CBC complex is replaced by cytoplasmic cap-binding protein eIF4E. The pioneer round of mRNA translation mediated by the CBC complex plays a central role in nonsense-mediated mRNA decay (NMD), NMD only taking place in mRNAs bound to the CBC complex, but not on eIF4E-bound mRNAs. The CBC complex enhances NMD in mRNAs containing at least one exon-junction complex (EJC) via its interaction with UPF1, promoting the interaction between UPF1 and UPF2. The CBC complex is also involved in 'failsafe' NMD, which is independent of the EJC complex, while it does not participate in Staufen-mediated mRNA decay (SMD). During cell proliferation, the CBC complex is also involved in microRNAs (miRNAs) biogenesis via its interaction with SRRT/ARS2 and is required for miRNA-mediated RNA interference. The CBC complex also acts as a negative regulator of PARN, thereby acting as an inhibitor of mRNA deadenylation. In the CBC complex, NCBP1/CBP80 does not bind directly capped RNAs (m7GpppG-capped RNA) but is required to stabilize the movement of the N-terminal loop of NCBP2/CBP20 and lock the CBC into a high affinity cap-binding state with the cap structure. Associates with NCBP3 to form an alternative cap-binding complex (CBC) which plays a key role in mRNA export and is particularly important in cellular stress situations such as virus infections. The conventional CBC with NCBP2 binds both small nuclear RNA (snRNA) and messenger (mRNA) and is involved in their export from the nucleus whereas the alternative CBC with NCBP3 does not bind snRNA and associates only with mRNA thereby playing a role only in mRNA export. NCBP1/CBP80 is required for cell growth and viability. The sequence is that of Nuclear cap-binding protein subunit 1 (NCBP1) from Homo sapiens (Human).